A 407-amino-acid polypeptide reads, in one-letter code: Expansin-like protein 2 (407 aa).

The N-terminal stretch at 1-23 (MKMKNFLSKSLLVLLIGLIGVKS) is a signal peptide. The Expansin-like EG45 domain maps to 42-141 (HGNCGYEQLT…KKVSCDVTGN (100 aa)). Intrachain disulfides connect Cys45-Cys75 and Cys78-Cys136. Residues Asn70, Asn117, and Asn387 are each glycosylated (N-linked (GlcNAc...) asparagine).

The protein belongs to the expansin family. Expansin A subfamily.

The protein localises to the secreted. Functionally, unlikely to encode with a protein with expansin activity. The chain is Expansin-like protein 2 (expl2) from Dictyostelium discoideum (Social amoeba).